A 156-amino-acid chain; its full sequence is Small ribosomal subunit protein uS7 (156 aa).

This sequence belongs to the universal ribosomal protein uS7 family. In terms of assembly, part of the 30S ribosomal subunit. Contacts proteins S9 and S11.

Functionally, one of the primary rRNA binding proteins, it binds directly to 16S rRNA where it nucleates assembly of the head domain of the 30S subunit. Is located at the subunit interface close to the decoding center, probably blocks exit of the E-site tRNA. The polypeptide is Small ribosomal subunit protein uS7 (Mycolicibacterium vanbaalenii (strain DSM 7251 / JCM 13017 / BCRC 16820 / KCTC 9966 / NRRL B-24157 / PYR-1) (Mycobacterium vanbaalenii)).